The chain runs to 115 residues: Large ribosomal subunit protein bL20c (115 aa).

It belongs to the bacterial ribosomal protein bL20 family.

The protein resides in the plastid. It is found in the chloroplast. In terms of biological role, binds directly to 23S ribosomal RNA and is necessary for the in vitro assembly process of the 50S ribosomal subunit. It is not involved in the protein synthesizing functions of that subunit. The polypeptide is Large ribosomal subunit protein bL20c (rpl20) (Cyanidium caldarium (Red alga)).